A 72-amino-acid chain; its full sequence is uncharacterized protein (72 aa).

Residues 51–72 (AKGGRQRGETVVVDDQCKEHKE) form a disordered region.

It belongs to the YiiE family.

This is an uncharacterized protein from Escherichia coli O6:K15:H31 (strain 536 / UPEC).